The primary structure comprises 362 residues: Homeobox-leucine zipper protein HOX11 (362 aa).

The span at 27-45 (REEAAEAGRRDHEVRRELE) shows a compositional bias: basic and acidic residues. Positions 27-179 (REEAAEAGRR…DDGGSARKKL (153 aa)) are disordered. Over residues 64-75 (LTLLPMVPGLGL) the composition is skewed to low complexity. The segment covering 126 to 135 (LSSSPNNSAG) has biased composition (polar residues). Over residues 145–160 (HGLGGNDAAPGGGGGD) the composition is skewed to gly residues. The homeobox DNA-binding region spans 174–233 (SARKKLRLSKEQSAFLEESFKEHSTLNPKQKLALAKQLNLRPRQVEVWFQNRRARTKLKQ). Positions 232–276 (KQTEVDCEYLKRCCETLTEENRRLQKELAELRALKTVHPFYMHLP) are leucine-zipper. The tract at residues 301 to 330 (AATSSTAAPPAAPSSGGIAATSSSAAAAAA) is disordered.

It belongs to the HD-ZIP homeobox family. Class II subfamily. As to expression, expressed in stems, leaf sheaths and blades and panicles.

The protein resides in the nucleus. Its function is as follows. Probable transcription factor. The chain is Homeobox-leucine zipper protein HOX11 (HOX11) from Oryza sativa subsp. japonica (Rice).